The following is a 283-amino-acid chain: Bifunctional protein FolD (283 aa).

NADP(+) is bound by residues 164 to 166, Ser-189, and Thr-230; that span reads GRS.

It belongs to the tetrahydrofolate dehydrogenase/cyclohydrolase family. As to quaternary structure, homodimer.

It catalyses the reaction (6R)-5,10-methylene-5,6,7,8-tetrahydrofolate + NADP(+) = (6R)-5,10-methenyltetrahydrofolate + NADPH. The catalysed reaction is (6R)-5,10-methenyltetrahydrofolate + H2O = (6R)-10-formyltetrahydrofolate + H(+). The protein operates within one-carbon metabolism; tetrahydrofolate interconversion. Functionally, catalyzes the oxidation of 5,10-methylenetetrahydrofolate to 5,10-methenyltetrahydrofolate and then the hydrolysis of 5,10-methenyltetrahydrofolate to 10-formyltetrahydrofolate. The sequence is that of Bifunctional protein FolD from Dictyoglomus thermophilum (strain ATCC 35947 / DSM 3960 / H-6-12).